The chain runs to 215 residues: Large ribosomal subunit protein uL4 (215 aa).

The tract at residues 43–97 is disordered; it reads RRQGTHSTKTRAEVSGGGKKPWRQKGTGRARAGSTRSPIWVGGGKTHTPKPRDYS.

It belongs to the universal ribosomal protein uL4 family. As to quaternary structure, part of the 50S ribosomal subunit.

One of the primary rRNA binding proteins, this protein initially binds near the 5'-end of the 23S rRNA. It is important during the early stages of 50S assembly. It makes multiple contacts with different domains of the 23S rRNA in the assembled 50S subunit and ribosome. Its function is as follows. Forms part of the polypeptide exit tunnel. This Brachyspira pilosicoli (Serpulina pilosicoli) protein is Large ribosomal subunit protein uL4.